A 152-amino-acid chain; its full sequence is Ubiquitin-conjugating enzyme E2 N (152 aa).

The 147-residue stretch at 3-149 (GLPRRIIKET…ARAWTRLYAM (147 aa)) folds into the UBC core domain. N6-acetyllysine is present on K82. C87 functions as the Glycyl thioester intermediate in the catalytic mechanism. K92 participates in a covalent cross-link: Glycyl lysine isopeptide (Lys-Gly) (interchain with G-Cter in ISG15).

The protein belongs to the ubiquitin-conjugating enzyme family. As to quaternary structure, heterodimer with UBE2V2. Interacts (UBE2V2-UBE2N heterodimer) with the E3 ligase STUB1 (via the U-box domain); the complex has a specific 'Lys-63'-linked polyubiquitination activity. Interacts with RNF8 and RNF168. Interacts with RNF11. Interacts with the E3 ligases, HLTF and SHPRH; the interactions promote the 'Lys-63'-linked polyubiquitination of PCNA upon genotoxic stress and lead to DNA repair. Interacts with ARIH2 (via RING-type 2). Interacts with OTUB1; leading to inhibit E2-conjugating activity. Interacts with RIGI and RNF135; involved in RIGI ubiquitination and activation. Post-translationally, conjugation to ISG15 impairs formation of the thioester bond with ubiquitin but not interaction with UBE2V2.

It carries out the reaction S-ubiquitinyl-[E1 ubiquitin-activating enzyme]-L-cysteine + [E2 ubiquitin-conjugating enzyme]-L-cysteine = [E1 ubiquitin-activating enzyme]-L-cysteine + S-ubiquitinyl-[E2 ubiquitin-conjugating enzyme]-L-cysteine.. Its pathway is protein modification; protein ubiquitination. With respect to regulation, activity is inhibited by binding to OTUB1, which prevents 'Lys-63'-linked polyubiquitination. In terms of biological role, the UBE2V1-UBE2N and UBE2V2-UBE2N heterodimers catalyze the synthesis of non-canonical 'Lys-63'-linked polyubiquitin chains. This type of polyubiquitination does not lead to protein degradation by the proteasome. Mediates transcriptional activation of target genes. Plays a role in the control of progress through the cell cycle and differentiation. Plays a role in the error-free DNA repair pathway and contributes to the survival of cells after DNA damage. Acts together with the E3 ligases, HLTF and SHPRH, in the 'Lys-63'-linked poly-ubiquitination of PCNA upon genotoxic stress, which is required for DNA repair. Appears to act together with E3 ligase RNF5 in the 'Lys-63'-linked polyubiquitination of JKAMP thereby regulating JKAMP function by decreasing its association with components of the proteasome and ERAD. Promotes TRIM5 capsid-specific restriction activity and the UBE2V1-UBE2N heterodimer acts in concert with TRIM5 to generate 'Lys-63'-linked polyubiquitin chains which activate the MAP3K7/TAK1 complex which in turn results in the induction and expression of NF-kappa-B and MAPK-responsive inflammatory genes. Together with RNF135 and UB2V1, catalyzes the viral RNA-dependent 'Lys-63'-linked polyubiquitination of RIGI to activate the downstream signaling pathway that leads to interferon beta production. UBE2V1-UBE2N together with TRAF3IP2 E3 ubiquitin ligase mediate 'Lys-63'-linked polyubiquitination of TRAF6, a component of IL17A-mediated signaling pathway. This is Ubiquitin-conjugating enzyme E2 N (UBE2N) from Macaca fascicularis (Crab-eating macaque).